The sequence spans 971 residues: Valine--tRNA ligase (971 aa).

Positions 55-65 (PNVTGSLHMGH) match the 'HIGH' region motif. A 'KMSKS' region motif is present at residues 572–576 (KMSKS). Lysine 575 is a binding site for ATP. Residues 906–933 (KAELGRLQKDLDKVQKQHDQIASKLANE) are a coiled coil.

It belongs to the class-I aminoacyl-tRNA synthetase family. ValS type 1 subfamily. As to quaternary structure, monomer.

It is found in the cytoplasm. The catalysed reaction is tRNA(Val) + L-valine + ATP = L-valyl-tRNA(Val) + AMP + diphosphate. In terms of biological role, catalyzes the attachment of valine to tRNA(Val). As ValRS can inadvertently accommodate and process structurally similar amino acids such as threonine, to avoid such errors, it has a 'posttransfer' editing activity that hydrolyzes mischarged Thr-tRNA(Val) in a tRNA-dependent manner. The polypeptide is Valine--tRNA ligase (Acinetobacter baylyi (strain ATCC 33305 / BD413 / ADP1)).